The sequence spans 159 residues: UPF0587 protein v1g245604 (159 aa).

Residues Cys33, Cys36, Cys67, and Cys70 each coordinate Zn(2+).

Belongs to the UPF0587 family.

This Nematostella vectensis (Starlet sea anemone) protein is UPF0587 protein v1g245604.